Consider the following 899-residue polypeptide: Protein translocase subunit SecA (899 aa).

ATP is bound by residues glutamine 87, 105-109, and aspartate 512; that span reads GEGKT. Residues 846–899 are disordered; that stretch reads MEEEQQQQAQKKIVFNLGEEPATAPQPARSKKSASRNDPCPCGSGKKYKKCCGK. Cysteine 885, cysteine 887, cysteine 896, and cysteine 897 together coordinate Zn(2+).

It belongs to the SecA family. In terms of assembly, monomer and homodimer. Part of the essential Sec protein translocation apparatus which comprises SecA, SecYEG and auxiliary proteins SecDF-YajC and YidC. Zn(2+) serves as cofactor.

The protein resides in the cell inner membrane. Its subcellular location is the cytoplasm. It catalyses the reaction ATP + H2O + cellular proteinSide 1 = ADP + phosphate + cellular proteinSide 2.. In terms of biological role, part of the Sec protein translocase complex. Interacts with the SecYEG preprotein conducting channel. Has a central role in coupling the hydrolysis of ATP to the transfer of proteins into and across the cell membrane, serving as an ATP-driven molecular motor driving the stepwise translocation of polypeptide chains across the membrane. This is Protein translocase subunit SecA from Geobacter metallireducens (strain ATCC 53774 / DSM 7210 / GS-15).